The sequence spans 261 residues: 1-(5-phosphoribosyl)-5-[(5-phosphoribosylamino)methylideneamino] imidazole-4-carboxamide isomerase (261 aa).

The active-site Proton acceptor is the D7. D129 (proton donor) is an active-site residue.

The protein belongs to the HisA/HisF family.

The protein resides in the cytoplasm. It carries out the reaction 1-(5-phospho-beta-D-ribosyl)-5-[(5-phospho-beta-D-ribosylamino)methylideneamino]imidazole-4-carboxamide = 5-[(5-phospho-1-deoxy-D-ribulos-1-ylimino)methylamino]-1-(5-phospho-beta-D-ribosyl)imidazole-4-carboxamide. It participates in amino-acid biosynthesis; L-histidine biosynthesis; L-histidine from 5-phospho-alpha-D-ribose 1-diphosphate: step 4/9. The chain is 1-(5-phosphoribosyl)-5-[(5-phosphoribosylamino)methylideneamino] imidazole-4-carboxamide isomerase from Colwellia psychrerythraea (strain 34H / ATCC BAA-681) (Vibrio psychroerythus).